A 1237-amino-acid polypeptide reads, in one-letter code: Zinc finger protein 687 (1237 aa).

2 disordered regions span residues 1–80 and 96–330; these read MGDM…PDIS and EALA…PLKV. Low complexity predominate over residues 97–111; the sequence is ALAGGSAGDGAQAAG. Phosphoserine is present on residues Ser102, Ser129, and Ser140. Residues 132-144 are compositionally biased toward pro residues; sequence PSLPGTPHSPAPP. Position 148 is a phosphothreonine (Thr148). 6 positions are modified to phosphoserine: Ser227, Ser242, Ser251, Ser253, Ser266, and Ser271. Polar residues predominate over residues 234 to 244; the sequence is LAQQGSGSSPK. Residue Lys285 forms a Glycyl lysine isopeptide (Lys-Gly) (interchain with G-Cter in SUMO2) linkage. Positions 297–310 are enriched in low complexity; the sequence is SSPGSPQSPSSGAE. Residues Lys336 and Lys372 each participate in a glycyl lysine isopeptide (Lys-Gly) (interchain with G-Cter in SUMO2) cross-link. The residue at position 374 (Ser374) is a Phosphoserine. Thr377 is subject to Phosphothreonine. Glycyl lysine isopeptide (Lys-Gly) (interchain with G-Cter in SUMO2) cross-links involve residues Lys384, Lys397, and Lys422. Ser433 is modified (phosphoserine). Residues Lys435, Lys439, Lys451, and Lys464 each participate in a glycyl lysine isopeptide (Lys-Gly) (interchain with G-Cter in SUMO2) cross-link. Ser495 bears the Phosphoserine mark. The C2H2-type 1; degenerate zinc finger occupies 533–552; that stretch reads YRCLECGDAFSLEKSLARHY. 5 consecutive C2H2-type zinc fingers follow at residues 705–727, 764–787, 792–815, 827–849, and 858–881; these read NVCP…QRMH, YRCP…QTSH, HKCP…YSQH, YKCA…FDQH, and FKCP…KNTH. Residues 880–890 show a composition bias toward basic and acidic residues; it reads THQSGRLEETA. Positions 880–957 are disordered; the sequence is THQSGRLEET…LGSKGLKGGG (78 aa). Thr900 carries the post-translational modification Phosphothreonine. A compositionally biased stretch (low complexity) spans 915–925; that stretch reads AAPATEESSSS. Lys954 participates in a covalent cross-link: Glycyl lysine isopeptide (Lys-Gly) (interchain with G-Cter in SUMO2). C2H2-type zinc fingers lie at residues 963 to 986 and 993 to 1016; these read WTCG…KKEH and FPCR…RVNH. Lys1043 is covalently cross-linked (Glycyl lysine isopeptide (Lys-Gly) (interchain with G-Cter in SUMO2)). Positions 1051–1121 are disordered; it reads LQLGAQSPGR…LRYRSSSSTE (71 aa). The residue at position 1057 (Ser1057) is a Phosphoserine. Arg1060 is subject to Omega-N-methylarginine. Phosphoserine is present on residues Ser1082, Ser1083, and Ser1085. Position 1101 is an omega-N-methylarginine (Arg1101). Phosphoserine occurs at positions 1106 and 1118. The segment at 1135–1158 adopts a C2H2-type 9 zinc-finger fold; that stretch reads QQCLDCGLCFASPGSLSRHRFISH. Residues 1159 to 1195 are disordered; the sequence is KKRRGVGKASALGLGDGEEEAPPSRSDPDGGDSPLPA. Phosphoserine is present on residues Ser1184, Ser1191, and Ser1211. The C2H2-type 10 zinc finger occupies 1200 to 1222; sequence LTCKVCGKSCDSPLNLKTHFRTH.

The protein belongs to the krueppel C2H2-type zinc-finger protein family. In terms of assembly, interacts with ZMYND8. As to expression, widely expressed with highest levels in obvary, muscle, blood and lung.

The protein localises to the cytoplasm. The protein resides in the nucleus. Its function is as follows. May be involved in transcriptional regulation. In Homo sapiens (Human), this protein is Zinc finger protein 687 (ZNF687).